Consider the following 60-residue polypeptide: Large ribosomal subunit protein bL32 (60 aa).

Residues 1–19 (MAVPKRKKSKSRRNMHRSH) are compositionally biased toward basic residues. The segment at 1–24 (MAVPKRKKSKSRRNMHRSHHAIEP) is disordered.

Belongs to the bacterial ribosomal protein bL32 family.

This Wolbachia pipientis wMel protein is Large ribosomal subunit protein bL32.